Consider the following 344-residue polypeptide: Krueppel-like factor 3 (344 aa).

The segment at Met-1–Ala-74 is repressor domain. Residue Lys-10 forms a Glycyl lysine isopeptide (Lys-Gly) (interchain with G-Cter in SUMO) linkage. Residues Glu-60 to Lys-68 carry the 9aaTAD; inactive motif. The short motif at Pro-61 to Thr-65 is the CTBP-binding motif element. The interval Val-66–Pro-111 is disordered. Lys-68 participates in a covalent cross-link: Glycyl lysine isopeptide (Lys-Gly) (interchain with G-Cter in SUMO2). 2 stretches are compositionally biased toward low complexity: residues Gly-70 to Ser-81 and Ser-91 to Ser-107. Ser-71, Ser-91, Ser-100, Ser-107, and Ser-110 each carry phosphoserine. A Glycyl lysine isopeptide (Lys-Gly) (interchain with G-Cter in SUMO2) cross-link involves residue Lys-195. Lys-197 participates in a covalent cross-link: Glycyl lysine isopeptide (Lys-Gly) (interchain with G-Cter in SUMO); alternate. A Glycyl lysine isopeptide (Lys-Gly) (interchain with G-Cter in SUMO2); alternate cross-link involves residue Lys-197. Phosphoserine is present on residues Ser-215, Ser-223, and Ser-249. A disordered region spans residues Ser-235 to Arg-254. 3 consecutive C2H2-type zinc fingers follow at residues His-259–His-283, Tyr-289–His-313, and Phe-319–His-341.

This sequence belongs to the krueppel C2H2-type zinc-finger protein family. As to quaternary structure, monomer. In terms of processing, sumoylated with SUMO1. Sumoylation is enhanced by PIAS1, PIAS2alpha and PIAS2beta, and PIAS4, but not by Pc2. Enhances transcriptional repression, but has no effect on DNA binding. Sumoylation on Lys-197 is the major site. As to expression, in 8.5 day embryos, expressed in midbrain, anterior hindbrain and ventral forebrain. In 9 day embryos, expressed throughout ventral anterior half of embryo including midbrain-hindbrain junction, ventral midbrain, diencephalon and forebrain. At 10.5 days, distribution is more widespread with expression also found in developing limb buds. Widely expressed in the adult.

The protein localises to the nucleus. Functionally, binds to the CACCC box of erythroid cell-expressed genes. May play a role in hematopoiesis. The polypeptide is Krueppel-like factor 3 (Klf3) (Mus musculus (Mouse)).